The primary structure comprises 462 residues: MNRKCICDLCSCGKHHCPHLPTKIYEKTEKPCFFSEYTEKYPTYLSYVPRESFKPKLEYQKVNIPMEGLSTTKRDFGTFNIVPVKHHLPEKATPIQDEMDFLTTYNQHYNYCPANRVNPIKPRDNKHQCNDKMECVPTYKADYLPWNQQKRSSIRPPQSYRPASCRFDHRTTHQDDYPIKNPVDTVSYKPPHGPKLCNIPLESMTSYKSSYVAHPMEKRCVYEGEKYKPSEVPFDSLTTHKDSYRGLIGEPAKTWKPAPNHPGLDIPFPSNTEFREKFQPWPTPKIVPKESIAYIPPEGKMDLLTTVQADYKCPNGVPAQSCRPVIHLKKSDRFESSTTNREDFKHWANIRREPVKPNHQLKFSDEPMEYMTTNRAHYVPHAPANTKSCKPTWSGPRVNIPLEGQTTYSTSFTPKEIQRCPASYPEPPGYIFDEVDAVGHRLYRPASGATSQESNHLGFGDA.

Mn stretches follow at residues 30 to 64 (KPCFFSEYTEKYPTYLSYVPRESFKPKLEYQKVNI), 65 to 97 (PMEGLSTTKRDFGTFNIVPVKHHLPEKATPIQD), 98 to 131 (EMDFLTTYNQHYNYCPANRVNPIKPRDNKHQCND), 132 to 165 (KMECVPTYKADYLPWNQQKRSSIRPPQSYRPASC), 166 to 199 (RFDHRTTHQDDYPIKNPVDTVSYKPPHGPKLCNI), 200 to 232 (PLESMTSYKSSYVAHPMEKRCVYEGEKYKPSEV), 233 to 266 (PFDSLTTHKDSYRGLIGEPAKTWKPAPNHPGLDI), 267 to 299 (PFPSNTEFREKFQPWPTPKIVPKESIAYIPPEG), 300 to 332 (KMDLLTTVQADYKCPNGVPAQSCRPVIHLKKSD), 333 to 366 (RFESSTTNREDFKHWANIRREPVKPNHQLKFSDE), 367 to 400 (PMEYMTTNRAHYVPHAPANTKSCKPTWSGPRVNI), and 401 to 434 (PLEGQTTYSTSFTPKEIQRCPASYPEPPGYIFDE).

The protein belongs to the FAM154 family. As to quaternary structure, associates with microtubules via the Mn regions.

The protein localises to the cytoplasm. Its subcellular location is the cytoskeleton. The protein resides in the microtubule organizing center. It localises to the centrosome. It is found in the centriole. The protein localises to the cilium basal body. Its subcellular location is the cilium axoneme. Its function is as follows. May play a role in the regulation of cilium length. Stabilizes microtubules at low temperature. The sequence is that of Stabilizer of axonemal microtubules 1 (Saxo1) from Rattus norvegicus (Rat).